The primary structure comprises 205 residues: MAATFRGTTPVPPDARPRLTVLSGPSGVGKSTVVAHLRTVHPEVWLSVSATTRKPRPGEQHGVQYFFVDDEEFDKLVANGELLEWAEFAGNRYGTPRKAVLDRLEAGEPVLLEIDLQGARQVRESMADAHLVFLAPPSWEELVRRLTGRGTEAPEIIERRLAAAKVELAAETEFDVTLVNTSVEDVSRELLALMLRQSGERDISG.

Residues 17 to 195 (PRLTVLSGPS…VSRELLALML (179 aa)) enclose the Guanylate kinase-like domain. 24-31 (GPSGVGKS) contacts ATP.

This sequence belongs to the guanylate kinase family.

It is found in the cytoplasm. It catalyses the reaction GMP + ATP = GDP + ADP. Its function is as follows. Essential for recycling GMP and indirectly, cGMP. This chain is Guanylate kinase, found in Streptomyces kasugaensis.